The primary structure comprises 205 residues: Small ribosomal subunit protein uS5 (205 aa).

Residues 1–25 (MSGAQRGQRGGERRGGRDDRRGQGA) form a disordered region. The segment covering 9-24 (RGGERRGGRDDRRGQG) has biased composition (basic and acidic residues). Residues 30 to 93 (YIERVVAINR…EEAKKHFFRV (64 aa)) form the S5 DRBM domain.

This sequence belongs to the universal ribosomal protein uS5 family. Part of the 30S ribosomal subunit. Contacts proteins S4 and S8.

Functionally, with S4 and S12 plays an important role in translational accuracy. Located at the back of the 30S subunit body where it stabilizes the conformation of the head with respect to the body. The protein is Small ribosomal subunit protein uS5 of Nocardioides sp. (strain ATCC BAA-499 / JS614).